The sequence spans 103 residues: Somatostatin-2 (103 aa).

Positions Met1 to Ser21 are cleaved as a signal peptide. Residues Gln22–Glu87 constitute a propeptide that is removed on maturation. Cys92 and Cys103 are joined by a disulfide.

This sequence belongs to the somatostatin family.

The protein resides in the secreted. Functionally, somatostatin inhibits the release of somatotropin. This Pelophylax ridibundus (Marsh frog) protein is Somatostatin-2 (sst2).